The following is a 119-amino-acid chain: Holo-[acyl-carrier-protein] synthase (119 aa).

Asp-8 and Glu-59 together coordinate Mg(2+).

The protein belongs to the P-Pant transferase superfamily. AcpS family. It depends on Mg(2+) as a cofactor.

The protein resides in the cytoplasm. The catalysed reaction is apo-[ACP] + CoA = holo-[ACP] + adenosine 3',5'-bisphosphate + H(+). Its function is as follows. Transfers the 4'-phosphopantetheine moiety from coenzyme A to a Ser of acyl-carrier-protein. The sequence is that of Holo-[acyl-carrier-protein] synthase from Lactococcus lactis subsp. lactis (strain IL1403) (Streptococcus lactis).